The primary structure comprises 263 residues: MTIYEQIKDALKNKINELVSPQEVKKTLQEKYGTNPDSIILSDYCYNRYNKGISFNKHLFEYMNRSSYKYLGENSLYTGLIFRKSKGEDKEVIVGEWVNGVKSLREASVTNNQINDQAEIISKEQLVNLYNEYNQILRYEMNVLNCKPTELRHLIGRIGEFICAIQTNGTLARQTNQHGFDVVSDGRRISVKTTAQSSGFISINKNTFYDFDDFFVVQYVNDDFKVIFFGSKEEVQKISRIYGSQYEVEISLLKKLNKEYQLN.

This is an uncharacterized protein from Bacillus subtilis (strain 168).